Consider the following 327-residue polypeptide: Undecaprenyl-phosphate 4-deoxy-4-formamido-L-arabinose transferase (327 aa).

The Cytoplasmic portion of the chain corresponds to 1 to 235 (MFDAAPIKKV…TCLTTTPLRL (235 aa)). A helical transmembrane segment spans residues 236 to 256 (LSLLGSVIAIGGFSLSVLLIV). At 257-269 (LRLALGPQWAAEG) the chain is on the periplasmic side. The chain crosses the membrane as a helical span at residues 270-290 (VFMLFAVLFTFIGAQFIGMGL). The Cytoplasmic portion of the chain corresponds to 291–327 (LGEYIGRIYNDVRARPRYFVQQVIYPESTSFTEESHQ).

Belongs to the glycosyltransferase 2 family.

It is found in the cell inner membrane. The enzyme catalyses UDP-4-deoxy-4-formamido-beta-L-arabinose + di-trans,octa-cis-undecaprenyl phosphate = 4-deoxy-4-formamido-alpha-L-arabinopyranosyl di-trans,octa-cis-undecaprenyl phosphate + UDP. Its pathway is glycolipid biosynthesis; 4-amino-4-deoxy-alpha-L-arabinose undecaprenyl phosphate biosynthesis; 4-amino-4-deoxy-alpha-L-arabinose undecaprenyl phosphate from UDP-4-deoxy-4-formamido-beta-L-arabinose and undecaprenyl phosphate: step 1/2. It functions in the pathway bacterial outer membrane biogenesis; lipopolysaccharide biosynthesis. In terms of biological role, catalyzes the transfer of 4-deoxy-4-formamido-L-arabinose from UDP to undecaprenyl phosphate. The modified arabinose is attached to lipid A and is required for resistance to polymyxin and cationic antimicrobial peptides. In Salmonella paratyphi A (strain ATCC 9150 / SARB42), this protein is Undecaprenyl-phosphate 4-deoxy-4-formamido-L-arabinose transferase.